A 224-amino-acid chain; its full sequence is Inhibitor of apoptosis protein (224 aa).

The stretch at 29 to 92 (VDARNQSFAI…GFWSRNCGFM (64 aa)) is one BIR repeat. Positions 62, 65, 82, and 89 each coordinate Zn(2+). A C4-type zinc finger spans residues 189 to 207 (CMTCGIEPIKKDENFCNAC).

It belongs to the asfivirus IAP family. Interacts with subunit p17 of host CASP3.

It localises to the host cytoplasm. Its subcellular location is the virion. Prevent apoptosis of host cell by inhibiting caspase-3/CASP3 activation to promote the viral replication. Also induces the activation of host NF-kappaB. The protein is Inhibitor of apoptosis protein of Ornithodoros (relapsing fever ticks).